A 289-amino-acid polypeptide reads, in one-letter code: Ribosomal RNA small subunit methyltransferase H (289 aa).

S-adenosyl-L-methionine-binding positions include 40–42, aspartate 60, phenylalanine 84, aspartate 106, and glutamine 113; that span reads GGH.

It belongs to the methyltransferase superfamily. RsmH family.

The protein resides in the cytoplasm. The catalysed reaction is cytidine(1402) in 16S rRNA + S-adenosyl-L-methionine = N(4)-methylcytidine(1402) in 16S rRNA + S-adenosyl-L-homocysteine + H(+). Functionally, specifically methylates the N4 position of cytidine in position 1402 (C1402) of 16S rRNA. The chain is Ribosomal RNA small subunit methyltransferase H from Haemophilus influenzae (strain PittGG).